A 261-amino-acid polypeptide reads, in one-letter code: Oxidoreductase ptaF (261 aa).

It belongs to the avfA family.

Its pathway is secondary metabolite biosynthesis. Functionally, oxidoreductase; part of the gene cluster that mediates the biosynthesis of pestheic acid, a diphenyl ether which is a biosynthetic precursor of the unique chloropupukeananes. The biosynthesis initiates from condensation of acetate and malonate units catalyzed by the non-reducing PKS ptaA. As the ptaA protein is TE/CLC domain-deficient, hydrolysis and Claisen cyclization of the polyketide could be catalyzed by ptaB containing a beta-lactamase domain. The ptaB protein might hydrolyze the thioester bond between the ACP of ptaA and the intermediate to release atrochrysone carboxylic acid, which is spontaneously dehydrated to form endocrocin anthrone. Endocrocin anthrone is then converted to endocrocin, catalyzed by the anthrone oxygenase ptaC. Spontaneous decarboxylation of endocrocin occurs to generate emodin. An O-methyltransferase (ptaH or ptaI) could methylate emodin to form physcion. PtaJ could then catalyze the oxidative cleavage of physcion, and rotation of the intermediate could then afford desmethylisosulochrin. PtaF, a putative NADH-dependent oxidoreductase, might also participate in the oxidative cleavage step. Desmethylisosulochrin is then transformed by another O-methyltransferase (ptaH or ptaI) to form isosulochrin. Chlorination of isosulochrin by ptaM in the cyclohexadienone B ring then produces chloroisosulochrin. PtaE is responsible for the oxidative coupling reactions of both benzophenones isosulouchrin and chloroisosulochrin to RES-1214-1 and pestheic acid respectively, regardless of chlorination. This is Oxidoreductase ptaF from Pestalotiopsis fici (strain W106-1 / CGMCC3.15140).